Consider the following 650-residue polypeptide: Peroxisomal biogenesis factor 8 (650 aa).

Residues 648-650 (AKL) carry the Microbody targeting signal motif.

It is found in the peroxisome matrix. Its function is as follows. Essential for peroxisome biogenesis. May play a role in triggering the protein import competence of individual peroxisomes. It may interact with PEX10. The polypeptide is Peroxisomal biogenesis factor 8 (PEX8) (Pichia angusta (Yeast)).